The following is a 348-amino-acid chain: Ubiquitin thioesterase OTU1 (348 aa).

Residues 1–11 (MFGPAKGRHFG) show a composition bias toward basic residues. The segment at 1–39 (MFGPAKGRHFGVHPAPGFPGGVSQQAAGTKAGPAGAWPV) is disordered. The segment at 50–128 (RCKAKDGTHV…IIEEDQTRPR (79 aa)) is UBX-like. One can recognise an OTU domain in the interval 149 to 274 (LTRTVVPADN…GIHYDPLQRN (126 aa)). Residues 154-160 (VPADNSC) are cys-loop. The active site involves aspartate 157. Cysteine 160 (nucleophile) is an active-site residue. The variable-loop stretch occupies residues 213–223 (IKRDDTWGGAI). The his-loop stretch occupies residues 263-267 (YDGIH). Isoleucine 266 serves as a coordination point for substrate. The active site involves histidine 267. An S2 site region spans residues 291–296 (DIVLVQ). Residues 318–342 (LRCMVCQKGLTGQAEAREHAKETGH) form a C2H2-type zinc finger. Residue histidine 342 is part of the active site.

In terms of assembly, interacts with VCP; the interaction is direct. Interacts with FAF2/UBXD8. Interacts with DERL1; however interaction is dependent on the UBAX-like region, suggesting that it may be indirect. Interacts with PLAA, UBXN6 and VCP; may form a complex involved in macroautophagy.

It is found in the cytoplasm. The catalysed reaction is Thiol-dependent hydrolysis of ester, thioester, amide, peptide and isopeptide bonds formed by the C-terminal Gly of ubiquitin (a 76-residue protein attached to proteins as an intracellular targeting signal).. In terms of biological role, hydrolase that can remove conjugated ubiquitin from proteins and participates in endoplasmic reticulum-associated degradation (ERAD) for misfolded lumenal proteins. May act by triming the ubiquitin chain on the associated substrate to facilitate their threading through the VCP/p97 pore. Ubiquitin moieties on substrates may present a steric impediment to the threading process when the substrate is transferred to the VCP pore and threaded through VCP's axial channel. Mediates deubiquitination of 'Lys-27'-, 'Lys-29'- and 'Lys-33'-linked polyubiquitin chains. Also able to hydrolyze 'Lys-11'-linked ubiquitin chains. Cleaves both polyubiquitin and di-ubiquitin. May play a role in macroautophagy, regulating for instance the clearance of damaged lysosomes. May recruit PLAA, UBXN6 and VCP to damaged lysosome membranes decorated with K48-linked ubiquitin chains and remove these chains allowing autophagosome formation. This Homo sapiens (Human) protein is Ubiquitin thioesterase OTU1 (YOD1).